A 327-amino-acid chain; its full sequence is Xylosidase/arabinosidase 43A (327 aa).

The Proton acceptor role is filled by aspartate 12. The Proton donor role is filled by glutamate 228.

It belongs to the glycosyl hydrolase 43 family.

The protein localises to the secreted. It carries out the reaction Hydrolysis of (1-&gt;4)-beta-D-xylans, to remove successive D-xylose residues from the non-reducing termini.. It catalyses the reaction Hydrolysis of terminal non-reducing alpha-L-arabinofuranoside residues in alpha-L-arabinosides.. Activity is inhibited by Ag(+), Li(+), Pb(2+), Cu(2+), Cr(3+), Co(3+), Fe(3+), Ni(2+), Mg(2+), Zn(2+), EDTA and SDS; but not by Mn(2+), Ca(2+) and beta-mercaptoethanol. In terms of biological role, bifunctional beta-xylosidase/alpha-L-arabinosidases with a low level of xylanase activity. Is most active on 4-nitrophenyl beta-D-xylopyranoside (pNPX) (defined as 100%), moderate on p-nitrophenyl-alpha-L-arabinofuranoside (pNPA) (23.7%), and weak on beechwood xylan (15.9%) and birchwood xylan (15.2%). Is able to attack xylooligosacchardies with degrees of polymerisation of 2-5, releasing the amounts of reducing sugars in the order of xylopentose &gt; xylotetraose &gt; xylotriose &gt; xylobiose, i.e. the rate of xylose released from xylooligosacchardies increased with the chain length. No activity is detected in the presence of carboxymethyl cellulose-sodium (CMC-Na), sugar beet arabinan, AZCL-arabinan (debranched), 4-nitrophenyl a-D - galactopyranoside, 2-nitrophenyl beta-D-galactopyranoside, and 4-nitrophenyl alpha-D-glucopyranoside. This is Xylosidase/arabinosidase 43A from Humicola insolens (Soft-rot fungus).